The primary structure comprises 295 residues: MSTTPASNAKFSDYLELTKPRLSMLSVMTALVGYLAARPPWDPIQLALLVLGTSAAAGGVAALNQWLEHDTDAHMKRTADRPIPAGKVATGSAFVLGVLMCIGSLFLLYALVHPLAALFTLLTIFSYLGWYTPAKRWSRWSTEIGAVAGAFPPLIGWSAGEGRVTALGWVLFGVLFFWQVPHFMAVAWTYRKDYSAVHFPMLPVRDESGERVALWSLINTAALLVTSLLPLLWGLTTWFYGVAAAVTGLWFLWQAIKFMQPATRDRAARKLFFASIGYLPLVLGALVIDRLFLVS.

The next 7 helical transmembrane spans lie at 43-63 (PIQLALLVLGTSAAAGGVAAL), 92-112 (SAFVLGVLMCIGSLFLLYALV), 114-134 (PLAALFTLLTIFSYLGWYTPA), 140-160 (WSTEIGAVAGAFPPLIGWSAG), 166-186 (ALGWVLFGVLFFWQVPHFMAV), 231-251 (LLWGLTTWFYGVAAAVTGLWF), and 272-292 (FFASIGYLPLVLGALVIDRLF).

This sequence belongs to the UbiA prenyltransferase family. Protoheme IX farnesyltransferase subfamily.

The protein resides in the cell inner membrane. The catalysed reaction is heme b + (2E,6E)-farnesyl diphosphate + H2O = Fe(II)-heme o + diphosphate. Its pathway is porphyrin-containing compound metabolism; heme O biosynthesis; heme O from protoheme: step 1/1. Functionally, converts heme B (protoheme IX) to heme O by substitution of the vinyl group on carbon 2 of heme B porphyrin ring with a hydroxyethyl farnesyl side group. The sequence is that of Protoheme IX farnesyltransferase from Opitutus terrae (strain DSM 11246 / JCM 15787 / PB90-1).